Reading from the N-terminus, the 239-residue chain is Carboxy-S-adenosyl-L-methionine synthase (239 aa).

S-adenosyl-L-methionine contacts are provided by residues Y35, 64–66 (GSS), 114–115 (DL), N129, and R196.

The protein belongs to the class I-like SAM-binding methyltransferase superfamily. Cx-SAM synthase family. Homodimer.

The catalysed reaction is prephenate + S-adenosyl-L-methionine = carboxy-S-adenosyl-L-methionine + 3-phenylpyruvate + H2O. Catalyzes the conversion of S-adenosyl-L-methionine (SAM) to carboxy-S-adenosyl-L-methionine (Cx-SAM). This Helicobacter hepaticus (strain ATCC 51449 / 3B1) protein is Carboxy-S-adenosyl-L-methionine synthase.